Reading from the N-terminus, the 713-residue chain is Probable 1-deoxy-D-xylulose-5-phosphate synthase 2, chloroplastic (713 aa).

Residues 1-30 (MALQASSSPSMFRAIPTNTNASCRRKLQVR) constitute a chloroplast transit peptide. Thiamine diphosphate-binding positions include His-140 and 181 to 183 (GHS). Asp-212 provides a ligand contact to Mg(2+). Thiamine diphosphate-binding positions include 213-214 (GA), Asn-241, Tyr-362, and Glu-444. Asn-241 lines the Mg(2+) pocket.

The protein belongs to the transketolase family. DXPS subfamily. In terms of assembly, homodimer. Mg(2+) is required as a cofactor. Thiamine diphosphate serves as cofactor.

Its subcellular location is the plastid. It is found in the chloroplast. The enzyme catalyses D-glyceraldehyde 3-phosphate + pyruvate + H(+) = 1-deoxy-D-xylulose 5-phosphate + CO2. It functions in the pathway metabolic intermediate biosynthesis; 1-deoxy-D-xylulose 5-phosphate biosynthesis; 1-deoxy-D-xylulose 5-phosphate from D-glyceraldehyde 3-phosphate and pyruvate: step 1/1. In terms of biological role, catalyzes the acyloin condensation reaction between C atoms 2 and 3 of pyruvate and glyceraldehyde 3-phosphate to yield 1-deoxy-D-xylulose-5-phosphate (DXP). Is a limiting enzyme for plastidic isoprenoid biosynthesis and essential for chloroplast development. The polypeptide is Probable 1-deoxy-D-xylulose-5-phosphate synthase 2, chloroplastic (Oryza sativa subsp. japonica (Rice)).